A 612-amino-acid polypeptide reads, in one-letter code: RNA polymerase sigma factor RpoD (612 aa).

Residues 191–206 (QQNNEEDEENNQEDHE) are compositionally biased toward acidic residues. A disordered region spans residues 191-210 (QQNNEEDEENNQEDHEDDHS). The segment at 378–448 (MVEANLRLVI…TRSIADQART (71 aa)) is sigma-70 factor domain-2. Residues 402-405 (DLIQ) carry the Interaction with polymerase core subunit RpoC motif. The sigma-70 factor domain-3 stretch occupies residues 457 to 533 (ETINKLNRIS…DTTLELPLDS (77 aa)). The segment at 546–599 (VLSGLTAREAKVLRMRFGIDMNTDHTLEEVGKQFDVTRERIRQIEAKALRKLRH) is sigma-70 factor domain-4. Positions 572–591 (LEEVGKQFDVTRERIRQIEA) form a DNA-binding region, H-T-H motif.

Belongs to the sigma-70 factor family. RpoD/SigA subfamily. As to quaternary structure, interacts transiently with the RNA polymerase catalytic core.

The protein localises to the cytoplasm. In terms of biological role, sigma factors are initiation factors that promote the attachment of RNA polymerase to specific initiation sites and are then released. This sigma factor is the primary sigma factor during exponential growth. The chain is RNA polymerase sigma factor RpoD from Buchnera aphidicola subsp. Acyrthosiphon pisum (strain APS) (Acyrthosiphon pisum symbiotic bacterium).